The following is a 537-amino-acid chain: Chaperonin GroEL (537 aa).

Residues Thr-29–Pro-32, Asp-86–Thr-90, Gly-413, Asn-477–Ala-479, and Asp-493 contribute to the ATP site.

Belongs to the chaperonin (HSP60) family. As to quaternary structure, forms a cylinder of 14 subunits composed of two heptameric rings stacked back-to-back. Interacts with the co-chaperonin GroES.

It is found in the cytoplasm. It catalyses the reaction ATP + H2O + a folded polypeptide = ADP + phosphate + an unfolded polypeptide.. In terms of biological role, together with its co-chaperonin GroES, plays an essential role in assisting protein folding. The GroEL-GroES system forms a nano-cage that allows encapsulation of the non-native substrate proteins and provides a physical environment optimized to promote and accelerate protein folding. The sequence is that of Chaperonin GroEL from Bifidobacterium animalis subsp. lactis (strain AD011).